The sequence spans 239 residues: 6-phosphogluconolactonase (239 aa).

The protein belongs to the glucosamine/galactosamine-6-phosphate isomerase family. 6-phosphogluconolactonase subfamily.

The catalysed reaction is 6-phospho-D-glucono-1,5-lactone + H2O = 6-phospho-D-gluconate + H(+). It functions in the pathway carbohydrate degradation; pentose phosphate pathway; D-ribulose 5-phosphate from D-glucose 6-phosphate (oxidative stage): step 2/3. Hydrolysis of 6-phosphogluconolactone to 6-phosphogluconate. The chain is 6-phosphogluconolactonase (pgl) from Xylella fastidiosa (strain Temecula1 / ATCC 700964).